A 277-amino-acid chain; its full sequence is Bifunctional protein FolD (277 aa).

Residues 156–158 (GRS), serine 183, and isoleucine 224 each bind NADP(+).

Belongs to the tetrahydrofolate dehydrogenase/cyclohydrolase family. Homodimer.

It catalyses the reaction (6R)-5,10-methylene-5,6,7,8-tetrahydrofolate + NADP(+) = (6R)-5,10-methenyltetrahydrofolate + NADPH. It carries out the reaction (6R)-5,10-methenyltetrahydrofolate + H2O = (6R)-10-formyltetrahydrofolate + H(+). It participates in one-carbon metabolism; tetrahydrofolate interconversion. Functionally, catalyzes the oxidation of 5,10-methylenetetrahydrofolate to 5,10-methenyltetrahydrofolate and then the hydrolysis of 5,10-methenyltetrahydrofolate to 10-formyltetrahydrofolate. This is Bifunctional protein FolD from Kosmotoga olearia (strain ATCC BAA-1733 / DSM 21960 / TBF 19.5.1).